The chain runs to 376 residues: D-alanine--D-alanine ligase B (376 aa).

The region spanning 155-361 is the ATP-grasp domain; sequence KRLMRDAGLP…QTDLMDKLIA (207 aa). Position 184-239 (184-239) interacts with ATP; sequence AALGTPDLFVKPANLGSSVGVSRARSEEEFAASCALAFRYDRKILVEQALNGAREI. The Mg(2+) site is built by D316, E328, and N330.

Belongs to the D-alanine--D-alanine ligase family. Mg(2+) is required as a cofactor. The cofactor is Mn(2+).

The protein resides in the cytoplasm. The catalysed reaction is 2 D-alanine + ATP = D-alanyl-D-alanine + ADP + phosphate + H(+). It participates in cell wall biogenesis; peptidoglycan biosynthesis. Functionally, cell wall formation. The polypeptide is D-alanine--D-alanine ligase B (Bradyrhizobium diazoefficiens (strain JCM 10833 / BCRC 13528 / IAM 13628 / NBRC 14792 / USDA 110)).